A 357-amino-acid polypeptide reads, in one-letter code: Guanine nucleotide-binding protein alpha-2 subunit (357 aa).

Gly-2 carries N-myristoyl glycine lipidation. A lipid anchor (S-palmitoyl cysteine) is attached at Cys-4. The G-alpha domain maps to 30–356 (NEVKLLLLGA…TQCVMKAGLY (327 aa)). The interval 33–46 (KLLLLGAGESGKST) is G1 motif. GTP is bound by residues Glu-41, Ser-42, Gly-43, Lys-44, Ser-45, and Thr-46. Ser-45 contributes to the Mg(2+) binding site. Position 113 is a phosphoserine (Ser-113). The GTP site is built by Asp-154, Leu-179, Thr-185, Gly-207, Asn-272, Lys-273, Asp-275, and Ala-328. The G2 motif stretch occupies residues 177-185 (DILHTRVMT). Thr-185 contacts Mg(2+). A G3 motif region spans residues 200-209 (FRLVDVGGQR). Positions 268-275 (ILFLNKSD) are G4 motif. The tract at residues 326-331 (TCATDT) is G5 motif.

The protein belongs to the G-alpha family. As to quaternary structure, g proteins are composed of 3 units; alpha, beta and gamma. The alpha chain contains the guanine nucleotide binding site. Interacts with the RAP guanine nucleotide exchange factor glfB. Mg(2+) serves as cofactor. In terms of processing, ser-113 is transiently phosphorylated following stimulation with extracellular cAMP.

Guanine nucleotide-binding proteins (G proteins) are involved as modulators or transducers in various transmembrane signaling systems. G alpha-2 is required for the early aggregation process and most of the known cAMP receptor-mediated responses. Interacts with downstream effector gflB, a Rap guanine nucleotide exchange factor, to regulate the balance between Ras and Rap signaling at the leading edge of chemotaxing cells. The sequence is that of Guanine nucleotide-binding protein alpha-2 subunit (gpaB) from Dictyostelium discoideum (Social amoeba).